The chain runs to 476 residues: UDP-glycosyltransferase 71C3 (476 aa).

UDP-alpha-D-glucose-binding positions include serine 290, 349-351 (APQ), 366-374 (HCGWNSVLE), and 388-391 (YAEQ).

This sequence belongs to the UDP-glycosyltransferase family.

In terms of biological role, possesses low quercetin 3-O-glucosyltransferase activity in vitro. The polypeptide is UDP-glycosyltransferase 71C3 (UGT71C3) (Arabidopsis thaliana (Mouse-ear cress)).